The following is a 301-amino-acid chain: Uricase (301 aa).

Residues Lys-11 and Thr-58 each act as charge relay system in the active site. Urate contacts are provided by Thr-58, Asp-59, Phe-160, Arg-177, Val-228, Gln-229, and Asn-255. His-257 serves as the catalytic Charge relay system. The Microbody targeting signal motif lies at 299–301; the sequence is AKL.

Belongs to the uricase family.

The protein localises to the peroxisome. It carries out the reaction urate + O2 + H2O = 5-hydroxyisourate + H2O2. Its pathway is purine metabolism; urate degradation; (S)-allantoin from urate: step 1/3. In terms of biological role, catalyzes the oxidation of uric acid to 5-hydroxyisourate, which is further processed to form (S)-allantoin. The chain is Uricase (uaZ) from Emericella nidulans (strain FGSC A4 / ATCC 38163 / CBS 112.46 / NRRL 194 / M139) (Aspergillus nidulans).